The chain runs to 361 residues: Divinyl chlorophyll a/b light-harvesting protein PcbD (361 aa).

A run of 6 helical transmembrane segments spans residues 27–47 (FIAS…GSTL), 93–113 (IVHL…GILF), 140–160 (FILG…VEWA), 201–221 (VMGG…FHIV), 248–268 (AVLS…AFWC), and 315–335 (LTNV…WHAL).

The protein belongs to the PsbB/PsbC family. IsiA/Pcb subfamily. As to quaternary structure, the antenna complex consists of divinyl chlorophylls (a and b) and divinyl chlorophyll a/b binding proteins and binds more divinyl chlorophyll b than does the antenna complex from high-light-adapted Prochlorococcus. The cofactor is divinyl chlorophyll a. Requires divinyl chlorophyll b as cofactor.

It is found in the cellular thylakoid membrane. Its function is as follows. The antenna complex functions as a light receptor, it captures and delivers excitation energy to photosystems II and I. The Prochlorales pcb genes are not related to higher plant LHCs. In Prochlorococcus marinus (strain SARG / CCMP1375 / SS120), this protein is Divinyl chlorophyll a/b light-harvesting protein PcbD (pcbD).